The following is an 880-amino-acid chain: Paramyosin (880 aa).

The tract at residues Met1–Val34 is nonhelical region. Positions Ala35–Leu859 form a coiled coil. Residues Leu860–Asn880 form a nonhelical region region.

It belongs to the paramyosin family. Homodimer.

It localises to the cytoplasm. The protein localises to the myofibril. Functionally, paramyosin is a major structural component of many thick filaments isolated from invertebrate muscles. This chain is Paramyosin, found in Brugia malayi (Filarial nematode worm).